A 482-amino-acid chain; its full sequence is ATP synthase subunit beta (482 aa).

162 to 169 is a binding site for ATP; that stretch reads GGAGVGKT.

It belongs to the ATPase alpha/beta chains family. As to quaternary structure, F-type ATPases have 2 components, CF(1) - the catalytic core - and CF(0) - the membrane proton channel. CF(1) has five subunits: alpha(3), beta(3), gamma(1), delta(1), epsilon(1). CF(0) has four main subunits: a(1), b(1), b'(1) and c(9-12).

The protein resides in the cellular thylakoid membrane. It catalyses the reaction ATP + H2O + 4 H(+)(in) = ADP + phosphate + 5 H(+)(out). In terms of biological role, produces ATP from ADP in the presence of a proton gradient across the membrane. The catalytic sites are hosted primarily by the beta subunits. The sequence is that of ATP synthase subunit beta from Trichormus variabilis (strain ATCC 29413 / PCC 7937) (Anabaena variabilis).